Here is a 340-residue protein sequence, read N- to C-terminus: MNNPIPSNLKSEAKKAAKILREFTEITSRNGPDKIIPAHVIAKAKGLAVLSVIKAGFLVTARGGSGIVLARLPDGKWSAPSAIGIAGLGGGFEIGIEVSDLVIILNYDRAVEAFAKGGNLTLGGNFTVAVGPLGRNLEGNVSLRSSAAVFTYCKSRGLFAGISLEGSCLIERKETNRKFYCQDIRAYDILFGDVPQPAQAEDLYEILNSFTEKYETEGQRINLKKVAREQRKAKELPPKPSSRPQPAHPPVQLNAGSQGNRNEYKLYPELSSYHEKTGNLNQPIEVTALYSFEGQQPGDLNFQAGDRIIVISKTDSNFDWWEGKLRGQTGIFPANYVTMN.

Basic and acidic residues predominate over residues 226 to 237 (VAREQRKAKELP). Residues 226–259 (VAREQRKAKELPPKPSSRPQPAHPPVQLNAGSQG) form a disordered region. Pro residues predominate over residues 238–249 (PKPSSRPQPAHP). Residues 281 to 340 (NQPIEVTALYSFEGQQPGDLNFQAGDRIIVISKTDSNFDWWEGKLRGQTGIFPANYVTMN) form the SH3 domain.

Belongs to the SH3YL1 family. Interacts with SH3D19. Expressed in skin, kidney, stomach, small intestine and colon. Highly expressed in the anagen hair follicle. In hair, it is expressed predominantly in the hair bulb, the hair shaft, inner root sheath, and outer root sheath in the lower half of the follicle.

In Mus musculus (Mouse), this protein is SH3 domain-containing YSC84-like protein 1 (Sh3yl1).